Here is a 774-residue protein sequence, read N- to C-terminus: Lon protease 1 (774 aa).

A Lon N-terminal domain is found at 9 to 202 (IPLLPLRGLL…KVIDFINNEK (194 aa)). 354–361 (GPPGVGKT) is an ATP binding site. A Lon proteolytic domain is found at 590–771 (EDQVGVVTGL…DEVLEHALVG (182 aa)). Residues Ser677 and Lys720 contribute to the active site.

Belongs to the peptidase S16 family. As to quaternary structure, homohexamer. Organized in a ring with a central cavity. Exists as a mixture of small oligomeric species in solution.

It localises to the cytoplasm. The enzyme catalyses Hydrolysis of proteins in presence of ATP.. In terms of biological role, ATP-dependent serine protease that mediates the selective degradation of mutant and abnormal proteins as well as certain short-lived regulatory proteins. Required for cellular homeostasis and for survival from DNA damage and developmental changes induced by stress. Degrades polypeptides processively to yield small peptide fragments that are 5 to 10 amino acids long. Binds to DNA in a double-stranded, site-specific manner. Has been implicated in preventing sigma(G) activity under non-sporulation conditions. This chain is Lon protease 1, found in Bacillus subtilis (strain 168).